The following is a 249-amino-acid chain: Ribosomal RNA small subunit methyltransferase J (249 aa).

Asp169 contributes to the S-adenosyl-L-methionine binding site.

This sequence belongs to the methyltransferase superfamily. RsmJ family.

Its subcellular location is the cytoplasm. The enzyme catalyses guanosine(1516) in 16S rRNA + S-adenosyl-L-methionine = N(2)-methylguanosine(1516) in 16S rRNA + S-adenosyl-L-homocysteine + H(+). In terms of biological role, specifically methylates the guanosine in position 1516 of 16S rRNA. This Buchnera aphidicola subsp. Schizaphis graminum (strain Sg) protein is Ribosomal RNA small subunit methyltransferase J.